Reading from the N-terminus, the 140-residue chain is Nucleoside diphosphate kinase (140 aa).

Residues lysine 11, phenylalanine 59, arginine 87, threonine 93, arginine 104, and asparagine 114 each coordinate ATP. Histidine 117 (pros-phosphohistidine intermediate) is an active-site residue.

This sequence belongs to the NDK family. In terms of assembly, homotetramer. Mg(2+) is required as a cofactor.

The protein resides in the cytoplasm. It carries out the reaction a 2'-deoxyribonucleoside 5'-diphosphate + ATP = a 2'-deoxyribonucleoside 5'-triphosphate + ADP. It catalyses the reaction a ribonucleoside 5'-diphosphate + ATP = a ribonucleoside 5'-triphosphate + ADP. Functionally, major role in the synthesis of nucleoside triphosphates other than ATP. The ATP gamma phosphate is transferred to the NDP beta phosphate via a ping-pong mechanism, using a phosphorylated active-site intermediate. This Rhodopseudomonas palustris (strain HaA2) protein is Nucleoside diphosphate kinase.